The chain runs to 85 residues: Small ribosomal subunit protein bS20 (85 aa).

The disordered stretch occupies residues 1-22 (MANIKSAIKRAKLSEERRAHNA).

This sequence belongs to the bacterial ribosomal protein bS20 family.

Its function is as follows. Binds directly to 16S ribosomal RNA. The chain is Small ribosomal subunit protein bS20 from Bacillus cytotoxicus (strain DSM 22905 / CIP 110041 / 391-98 / NVH 391-98).